The following is a 254-amino-acid chain: 14-3-3 protein 2 (254 aa).

This sequence belongs to the 14-3-3 family. As to quaternary structure, homodimer.

This Solanum lycopersicum (Tomato) protein is 14-3-3 protein 2 (TFT2).